The sequence spans 36 residues: Potassium channel toxin alpha-KTx 1.9 (36 aa).

The protein belongs to the short scorpion toxin superfamily. Potassium channel inhibitor family. Alpha-KTx 01 subfamily. Expressed by the venom gland.

It is found in the secreted. In terms of biological role, potent selective inhibitor of Kv1/KCNA voltage-gated potassium channels. The polypeptide is Potassium channel toxin alpha-KTx 1.9 (Centruroides limbatus (Bark scorpion)).